The following is a 408-amino-acid chain: Aminoacylase-1 (408 aa).

Residue histidine 80 coordinates Zn(2+). Residue aspartate 82 is part of the active site. Residue aspartate 113 participates in Zn(2+) binding. Glutamate 147 functions as the Proton acceptor in the catalytic mechanism. Glutamate 148, glutamate 175, and histidine 373 together coordinate Zn(2+).

This sequence belongs to the peptidase M20A family. As to quaternary structure, homodimer. Interacts with SPHK1. The cofactor is Zn(2+). In terms of tissue distribution, expression is highest in kidney, strong in brain and weaker in placenta and spleen.

The protein resides in the cytoplasm. The enzyme catalyses an N-acyl-L-amino acid + H2O = an L-alpha-amino acid + a carboxylate. It catalyses the reaction N-acetyl-L-methionine + H2O = L-methionine + acetate. The catalysed reaction is N-acetyl-L-glutamine + H2O = L-glutamine + acetate. In terms of biological role, catalyzes the hydrolysis of N-acetylated amino acids to acetate and free amino acids. The chain is Aminoacylase-1 (ACY1) from Homo sapiens (Human).